The sequence spans 1391 residues: DNA-directed RNA polymerase subunit beta' (1391 aa).

Zn(2+) is bound by residues cysteine 72, cysteine 74, cysteine 87, and cysteine 90. Aspartate 462, aspartate 464, and aspartate 466 together coordinate Mg(2+). Zn(2+) is bound by residues cysteine 816, cysteine 890, cysteine 897, and cysteine 900.

The protein belongs to the RNA polymerase beta' chain family. In terms of assembly, the RNAP catalytic core consists of 2 alpha, 1 beta, 1 beta' and 1 omega subunit. When a sigma factor is associated with the core the holoenzyme is formed, which can initiate transcription. Mg(2+) serves as cofactor. It depends on Zn(2+) as a cofactor.

The enzyme catalyses RNA(n) + a ribonucleoside 5'-triphosphate = RNA(n+1) + diphosphate. Functionally, DNA-dependent RNA polymerase catalyzes the transcription of DNA into RNA using the four ribonucleoside triphosphates as substrates. The sequence is that of DNA-directed RNA polymerase subunit beta' from Neisseria gonorrhoeae (strain ATCC 700825 / FA 1090).